Reading from the N-terminus, the 1241-residue chain is Putative ABC transporter B family member 8 (1241 aa).

A helical transmembrane segment spans residues phenylalanine 24–glycine 44. Positions methionine 33–glutamate 323 constitute an ABC transmembrane type-1 1 domain. An N-linked (GlcNAc...) asparagine glycan is attached at asparagine 48. A run of 5 helical transmembrane segments spans residues leucine 82–tryptophan 102, valine 157–phenylalanine 177, valine 183–leucine 203, glycine 263–glycine 283, and isoleucine 297–glutamate 317. Positions valine 360–leucine 596 constitute an ABC transporter 1 domain. Glycine 395–serine 402 contributes to the ATP binding site. N-linked (GlcNAc...) asparagine glycosylation is found at asparagine 571, asparagine 632, and asparagine 648. The ABC transmembrane type-1 2 domain maps to serine 676–lysine 964. The next 2 helical transmembrane spans lie at phenylalanine 686–alanine 706 and isoleucine 716–leucine 736. An N-linked (GlcNAc...) asparagine glycan is attached at asparagine 773. Helical transmembrane passes span isoleucine 797–leucine 815 and leucine 821–threonine 838. A glycan (N-linked (GlcNAc...) asparagine) is linked at asparagine 855. Helical transmembrane passes span alanine 899–leucine 919 and isoleucine 933–alanine 953. An ABC transporter 2 domain is found at isoleucine 998–alanine 1236. ATP is bound at residue glycine 1033 to serine 1040. N-linked (GlcNAc...) asparagine glycosylation occurs at asparagine 1187.

Belongs to the ABC transporter superfamily. ABCB family. Multidrug resistance exporter (TC 3.A.1.201) subfamily.

Its subcellular location is the membrane. The polypeptide is Putative ABC transporter B family member 8 (ABCB8) (Arabidopsis thaliana (Mouse-ear cress)).